The chain runs to 445 residues: Methionine aminopeptidase 2-1 (445 aa).

The disordered stretch occupies residues 1-99 (MAAQVPTEAL…FPNKAYPKGE (99 aa)). Positions 61-75 (KKKKKRKPKKKKKHP) are enriched in basic residues. Histidine 198 is a substrate binding site. Positions 218, 229, and 298 each coordinate a divalent metal cation. Histidine 306 contributes to the substrate binding site. Glutamate 331 and glutamate 426 together coordinate a divalent metal cation.

This sequence belongs to the peptidase M24A family. Methionine aminopeptidase eukaryotic type 2 subfamily. It depends on Co(2+) as a cofactor. Zn(2+) is required as a cofactor. The cofactor is Mn(2+). Fe(2+) serves as cofactor.

It is found in the cytoplasm. It catalyses the reaction Release of N-terminal amino acids, preferentially methionine, from peptides and arylamides.. Cotranslationally removes the N-terminal methionine from nascent proteins. The N-terminal methionine is often cleaved when the second residue in the primary sequence is small and uncharged (Met-Ala-, Cys, Gly, Pro, Ser, Thr, or Val). This is Methionine aminopeptidase 2-1 from Fusarium vanettenii (strain ATCC MYA-4622 / CBS 123669 / FGSC 9596 / NRRL 45880 / 77-13-4) (Fusarium solani subsp. pisi).